The primary structure comprises 293 residues: 4-hydroxy-tetrahydrodipicolinate synthase (293 aa).

Thr-45 is a binding site for pyruvate. Tyr-133 functions as the Proton donor/acceptor in the catalytic mechanism. Lys-161 serves as the catalytic Schiff-base intermediate with substrate. Pyruvate is bound at residue Ile-204.

Belongs to the DapA family. Homotetramer; dimer of dimers.

The protein localises to the cytoplasm. The catalysed reaction is L-aspartate 4-semialdehyde + pyruvate = (2S,4S)-4-hydroxy-2,3,4,5-tetrahydrodipicolinate + H2O + H(+). It functions in the pathway amino-acid biosynthesis; L-lysine biosynthesis via DAP pathway; (S)-tetrahydrodipicolinate from L-aspartate: step 3/4. In terms of biological role, catalyzes the condensation of (S)-aspartate-beta-semialdehyde [(S)-ASA] and pyruvate to 4-hydroxy-tetrahydrodipicolinate (HTPA). The polypeptide is 4-hydroxy-tetrahydrodipicolinate synthase (Yersinia pseudotuberculosis serotype I (strain IP32953)).